A 555-amino-acid chain; its full sequence is Glutamine--tRNA ligase (555 aa).

The 'HIGH' region signature appears at 34-44 (PEPNGYLHIGH). ATP-binding positions include 35–37 (EPN) and 41–47 (HIGHAKS). Asp-67 and Tyr-212 together coordinate L-glutamine. ATP contacts are provided by residues Thr-231, 261–262 (RL), and 269–271 (MSK). The 'KMSKS' region motif lies at 268-272 (VMSKR).

Belongs to the class-I aminoacyl-tRNA synthetase family. As to quaternary structure, monomer.

The protein localises to the cytoplasm. The enzyme catalyses tRNA(Gln) + L-glutamine + ATP = L-glutaminyl-tRNA(Gln) + AMP + diphosphate. In Proteus mirabilis (strain HI4320), this protein is Glutamine--tRNA ligase.